The following is a 402-amino-acid chain: Plasminogen activator inhibitor 1 (402 aa).

A signal peptide spans 1–23 (MRMSPVFACLALGLALIFGEGSA). Asn232, Asn288, and Asn352 each carry an N-linked (GlcNAc...) asparagine glycan.

Belongs to the serpin family. As to quaternary structure, forms a heterodimer with TMPRSS7. Interacts with VTN. Binds LRP1B; binding is followed by internalization and degradation. Interacts with PPP1CB. In complex with PLAU/uPA, interacts with PLAUR/uPAR. Interacts with SORL1 and LRP1, either alone or in complex with PLAU; these interactions are abolished in the presence of LRPAP1/RAP. The ternary complex composed of PLAUR-PLAU-PAI1 also interacts with SORL1. Interacts with PLAT/tPA. Also interacts with SORL1, when complexed to PLAT/tPA. As to expression, vascular endothelial cells may be the primary site of synthesis of plasma PAI1.

The protein localises to the secreted. Serine protease inhibitor. Inhibits TMPRSS7. Is a primary inhibitor of tissue-type plasminogen activator (PLAT) and urokinase-type plasminogen activator (PLAU). As PLAT inhibitor, it is required for fibrinolysis down-regulation and is responsible for the controlled degradation of blood clots. As PLAU inhibitor, it is involved in the regulation of cell adhesion and spreading. Acts as a regulator of cell migration, independently of its role as protease inhibitor. It is required for stimulation of keratinocyte migration during cutaneous injury repair. It is involved in cellular and replicative senescence. Plays a role in alveolar type 2 cells senescence in the lung. Is involved in the regulation of cementogenic differentiation of periodontal ligament stem cells, and regulates odontoblast differentiation and dentin formation during odontogenesis. The sequence is that of Plasminogen activator inhibitor 1 (SERPINE1) from Bos taurus (Bovine).